We begin with the raw amino-acid sequence, 400 residues long: Enoyl-[acyl-carrier-protein] reductase [NADH] (400 aa).

Residues 48–53, 74–75, 111–112, and 139–140 contribute to the NAD(+) site; these read GSSSGY, FE, DA, and LA. Tyrosine 225 provides a ligand contact to substrate. The active-site Proton donor is tyrosine 235. Residues lysine 244 and 273-275 contribute to the NAD(+) site; that span reads VVT.

This sequence belongs to the TER reductase family. In terms of assembly, monomer.

It catalyses the reaction a 2,3-saturated acyl-[ACP] + NAD(+) = a (2E)-enoyl-[ACP] + NADH + H(+). It functions in the pathway lipid metabolism; fatty acid biosynthesis. In terms of biological role, involved in the final reduction of the elongation cycle of fatty acid synthesis (FAS II). Catalyzes the reduction of a carbon-carbon double bond in an enoyl moiety that is covalently linked to an acyl carrier protein (ACP). The polypeptide is Enoyl-[acyl-carrier-protein] reductase [NADH] (Aliivibrio fischeri (strain ATCC 700601 / ES114) (Vibrio fischeri)).